The primary structure comprises 401 residues: MLKHDSMQVSQDQPIYSEAPLQLLLFVDGRPKSKQQVQRIRAYLKDLQAEYNFELQIIDVGQQPYLAEHFKLVATPALIKIHPEPRQILAGSNIITQLKNLWPRWQAAVDTYVKLQEDLQERVDDNGRVAQPTSTINSVAVSAELLRLSDEIFNLKQEKEKLLEQLQFKDRVIAMLVHDLRNPLTAAAIAIETLQSNYNPDIGQFQRLKPALVVNLLRQARTQAKTIDKMIADLLQVGRGTDTELIIIPQKTEIGLLCLEVLGELRDRYTTKAQKVETDIPQDLPCVYADPERIRQVLINLLDNAIKYTPEGGTISIAGLHRTTQKVQFSIGDTGPGIPTDNRERIFENHYRLERDEAKEGYGIGLSLCQRIIRAHYGQIWVDSNPHGGAWFHFTLPVYPS.

The Histidine kinase domain occupies 175–400 (MLVHDLRNPL…WFHFTLPVYP (226 aa)). A Phosphohistidine; by autocatalysis modification is found at H178.

As to quaternary structure, homooligomerizes. Interacts with KaiC. Participates in the KaiABC clock complex, whose core is composed of a KaiC homohexamer, 6 KaiB and up to 6 KaiA dimers. SasA and KaiB(fs) compete to bind to KaiC.

The enzyme catalyses ATP + protein L-histidine = ADP + protein N-phospho-L-histidine.. Its function is as follows. Member of the two-component regulatory system SasA/RpaA involved in genome-wide circadian gene expression. One of several clock output pathways. Participates in the Kai clock protein complex, the main circadian regulator in cyanobacteria, via its interaction with KaiC. KaiC enhances the autophosphorylation activity of SasA, which then transfers its phosphate group to RpaA to activate it. In addition to its output function, recruits fold-shifted KaiB (KaiB(fs)) to KaiC to cooperatively form the KaiB(6):KaiC(6) complex (independent of SasA kinase activity). Required for robustness of the circadian rhythm of gene expression and is involved in clock output, also required for adaptation to light/dark cycles. This chain is Adaptive-response sensory kinase SasA, found in Trichormus variabilis (strain ATCC 29413 / PCC 7937) (Anabaena variabilis).